The primary structure comprises 894 residues: Leucine--tRNA ligase, mitochondrial (894 aa).

The transit peptide at 1–9 (MLPRPSSRF) directs the protein to the mitochondrion. Residues 56-66 (PYPSGVLHIGH) carry the 'HIGH' region motif. Residues 646–650 (KMSKS) carry the 'KMSKS' region motif. Residue Lys-649 participates in ATP binding.

It belongs to the class-I aminoacyl-tRNA synthetase family.

It localises to the mitochondrion matrix. It catalyses the reaction tRNA(Leu) + L-leucine + ATP = L-leucyl-tRNA(Leu) + AMP + diphosphate. This is Leucine--tRNA ligase, mitochondrial (NAM2) from Saccharomyces paradoxus (Yeast).